The primary structure comprises 207 residues: Large ribosomal subunit protein uL4 (207 aa).

Positions 48–70 (KAQKTRSEVSGGGAKPWRQKGTG) are disordered.

It belongs to the universal ribosomal protein uL4 family. Part of the 50S ribosomal subunit.

Functionally, one of the primary rRNA binding proteins, this protein initially binds near the 5'-end of the 23S rRNA. It is important during the early stages of 50S assembly. It makes multiple contacts with different domains of the 23S rRNA in the assembled 50S subunit and ribosome. Forms part of the polypeptide exit tunnel. In Francisella tularensis subsp. holarctica (strain FTNF002-00 / FTA), this protein is Large ribosomal subunit protein uL4.